The primary structure comprises 297 residues: GTPase Era (297 aa).

In terms of domain architecture, Era-type G spans 7-174; the sequence is HSGFVSIIGR…VQVVRDLLPE (168 aa). The segment at 15–22 is G1; it reads GRPNVGKS. Residue 15 to 22 coordinates GTP; that stretch reads GRPNVGKS. Residues 41-45 are G2; that stretch reads QTTRN. The segment at 62–65 is G3; the sequence is DTPG. GTP-binding positions include 62–66 and 124–127; these read DTPGI and NKVD. Residues 124–127 are G4; that stretch reads NKVD. Residues 153-155 are G5; the sequence is VSA. A KH type-2 domain is found at 205 to 282; sequence THDEVPYSVA…FLELFVRVSR (78 aa).

It belongs to the TRAFAC class TrmE-Era-EngA-EngB-Septin-like GTPase superfamily. Era GTPase family. As to quaternary structure, monomer.

It is found in the cytoplasm. The protein resides in the cell inner membrane. An essential GTPase that binds both GDP and GTP, with rapid nucleotide exchange. Plays a role in 16S rRNA processing and 30S ribosomal subunit biogenesis and possibly also in cell cycle regulation and energy metabolism. The protein is GTPase Era of Geotalea daltonii (strain DSM 22248 / JCM 15807 / FRC-32) (Geobacter daltonii).